Here is a 219-residue protein sequence, read N- to C-terminus: MSESIMDFRRAKFLISAPDIAHLNQYLPGDVGVEIAFAGRSNAGKSSALNALTEQKSLARTSKTPGRTQLINVFALDDDRRLVDLPGYGFAQVPLALKNKWQQALGEYLQKRACLSGVVVLMDIRHPLKDLDMQMIEWAVASEIPVLALLTKSDKLAQSAKMKTVNEVRSALADFGDWVKVEPFSSLKGTGKPKVLSILNEWCHPQWLMDAMAQESPED.

The 175-residue stretch at 31 to 205 (VGVEIAFAGR…LSILNEWCHP (175 aa)) folds into the EngB-type G domain. GTP contacts are provided by residues 39–46 (GRSNAGKS), 66–70 (GRTQL), 84–87 (DLPG), 151–154 (TKSD), and 184–186 (FSS). 2 residues coordinate Mg(2+): Ser46 and Thr68.

The protein belongs to the TRAFAC class TrmE-Era-EngA-EngB-Septin-like GTPase superfamily. EngB GTPase family. It depends on Mg(2+) as a cofactor.

Its function is as follows. Necessary for normal cell division and for the maintenance of normal septation. In Shewanella denitrificans (strain OS217 / ATCC BAA-1090 / DSM 15013), this protein is Probable GTP-binding protein EngB.